A 130-amino-acid chain; its full sequence is Sulfurtransferase TusD (130 aa).

Cys80 acts as the Cysteine persulfide intermediate in catalysis.

The protein belongs to the DsrE/TusD family. Heterohexamer, formed by a dimer of trimers. The hexameric TusBCD complex contains 2 copies each of TusB, TusC and TusD. The TusBCD complex interacts with TusE.

It is found in the cytoplasm. Part of a sulfur-relay system required for 2-thiolation of 5-methylaminomethyl-2-thiouridine (mnm(5)s(2)U) at tRNA wobble positions. Accepts sulfur from TusA and transfers it in turn to TusE. This is Sulfurtransferase TusD from Sodalis glossinidius (strain morsitans).